Consider the following 119-residue polypeptide: DNA-binding protein Maeo_0998 (119 aa).

Basic and acidic residues predominate over residues 1–11 (MDIEEIKRQKM). Residues 1-36 (MDIEEIKRQKMMELQQQQAQGAPNPEEIQQQQEQER) form a disordered region. Residues 15 to 32 (QQQQAQGAPNPEEIQQQQ) show a composition bias toward low complexity.

Belongs to the PDCD5 family.

This Methanococcus aeolicus (strain ATCC BAA-1280 / DSM 17508 / OCM 812 / Nankai-3) protein is DNA-binding protein Maeo_0998.